The primary structure comprises 210 residues: ATP-dependent Clp protease proteolytic subunit (210 aa).

Ser107 acts as the Nucleophile in catalysis. Residue His132 is part of the active site.

Belongs to the peptidase S14 family. As to quaternary structure, fourteen ClpP subunits assemble into 2 heptameric rings which stack back to back to give a disk-like structure with a central cavity, resembling the structure of eukaryotic proteasomes.

The protein resides in the cytoplasm. It carries out the reaction Hydrolysis of proteins to small peptides in the presence of ATP and magnesium. alpha-casein is the usual test substrate. In the absence of ATP, only oligopeptides shorter than five residues are hydrolyzed (such as succinyl-Leu-Tyr-|-NHMec, and Leu-Tyr-Leu-|-Tyr-Trp, in which cleavage of the -Tyr-|-Leu- and -Tyr-|-Trp bonds also occurs).. Functionally, cleaves peptides in various proteins in a process that requires ATP hydrolysis. Has a chymotrypsin-like activity. Plays a major role in the degradation of misfolded proteins. This Cereibacter sphaeroides (strain ATCC 17025 / ATH 2.4.3) (Rhodobacter sphaeroides) protein is ATP-dependent Clp protease proteolytic subunit.